Consider the following 446-residue polypeptide: tRNA-2-methylthio-N(6)-dimethylallyladenosine synthase (446 aa).

Residues 3 to 120 form the MTTase N-terminal domain; sequence QKLFIKTYGC…LPEMVNSVAH (118 aa). Positions 12, 49, 83, 157, 161, and 164 each coordinate [4Fe-4S] cluster. The region spanning 143-375 is the Radical SAM core domain; the sequence is SSEGASAFVS…QQRILQFAQD (233 aa). The TRAM domain occupies 378–442; sequence RKMVGSTQRI…PNSLRGERVD (65 aa).

The protein belongs to the methylthiotransferase family. MiaB subfamily. As to quaternary structure, monomer. [4Fe-4S] cluster serves as cofactor.

The protein resides in the cytoplasm. It carries out the reaction N(6)-dimethylallyladenosine(37) in tRNA + (sulfur carrier)-SH + AH2 + 2 S-adenosyl-L-methionine = 2-methylsulfanyl-N(6)-dimethylallyladenosine(37) in tRNA + (sulfur carrier)-H + 5'-deoxyadenosine + L-methionine + A + S-adenosyl-L-homocysteine + 2 H(+). Catalyzes the methylthiolation of N6-(dimethylallyl)adenosine (i(6)A), leading to the formation of 2-methylthio-N6-(dimethylallyl)adenosine (ms(2)i(6)A) at position 37 in tRNAs that read codons beginning with uridine. In Hahella chejuensis (strain KCTC 2396), this protein is tRNA-2-methylthio-N(6)-dimethylallyladenosine synthase.